The chain runs to 187 residues: Elongation factor P (187 aa).

An N6-(3,6-diaminohexanoyl)-5-hydroxylysine modification is found at Lys-33.

Belongs to the elongation factor P family. Post-translationally, may be beta-lysylated on the epsilon-amino group of Lys-33 by the combined action of EpmA and EpmB, and then hydroxylated on the C5 position of the same residue by EpmC (if this protein is present). Lysylation is critical for the stimulatory effect of EF-P on peptide-bond formation. The lysylation moiety may extend toward the peptidyltransferase center and stabilize the terminal 3-CCA end of the tRNA. Hydroxylation of the C5 position on Lys-33 may allow additional potential stabilizing hydrogen-bond interactions with the P-tRNA.

Its subcellular location is the cytoplasm. It participates in protein biosynthesis; polypeptide chain elongation. In terms of biological role, involved in peptide bond synthesis. Alleviates ribosome stalling that occurs when 3 or more consecutive Pro residues or the sequence PPG is present in a protein, possibly by augmenting the peptidyl transferase activity of the ribosome. Modification of Lys-33 is required for alleviation. This chain is Elongation factor P, found in Blochmanniella floridana.